Here is a 239-residue protein sequence, read N- to C-terminus: Lactate utilization protein A (239 aa).

Belongs to the LutA/YkgE family.

Is involved in L-lactate degradation and allows cells to grow with lactate as the sole carbon source. This chain is Lactate utilization protein A, found in Bacillus cereus (strain G9842).